We begin with the raw amino-acid sequence, 141 residues long: 3-hydroxyacyl-[acyl-carrier-protein] dehydratase FabZ (141 aa).

Residue His48 is part of the active site.

Belongs to the thioester dehydratase family. FabZ subfamily.

It is found in the cytoplasm. The catalysed reaction is a (3R)-hydroxyacyl-[ACP] = a (2E)-enoyl-[ACP] + H2O. Involved in unsaturated fatty acids biosynthesis. Catalyzes the dehydration of short chain beta-hydroxyacyl-ACPs and long chain saturated and unsaturated beta-hydroxyacyl-ACPs. This chain is 3-hydroxyacyl-[acyl-carrier-protein] dehydratase FabZ, found in Streptococcus thermophilus (strain CNRZ 1066).